Here is a 656-residue protein sequence, read N- to C-terminus: Rab proteins geranylgeranyltransferase component A 2 (656 aa).

Disordered regions lie at residues methionine 188–alanine 209 and proline 609–asparagine 656. Residues glutamate 639–asparagine 656 show a composition bias toward basic and acidic residues. Residue serine 649 is modified to Phosphoserine.

The protein belongs to the Rab GDI family. In terms of assembly, monomer. Heterotrimer composed of RABGGTA, RABGGTB and CHML; within this trimer, RABGGTA and RABGGTB form the catalytic component B, while CHML (component A) mediates Rab protein binding. Interacts with RAB1A, RAB7A and RAB27A, but has much lower affinity for RAB1A, RAB7A and RAB27A than CHM. Interacts with the non-phosphorylated forms of RAB3A, RAB3B, RAB3C, RAB3D, RAB5B, RAB5C, RAB8A, RAB8B, RAB10, RAB12, RAB35, and RAB43.

It is found in the cytoplasm. The protein localises to the cytosol. Substrate-binding subunit (component A) of the Rab geranylgeranyltransferase (GGTase) complex. Binds unprenylated Rab proteins and presents the substrate peptide to the catalytic component B. The component A is thought to be regenerated by transferring its prenylated Rab back to the donor membrane. Less effective than CHM in supporting prenylation of Rab3 family. This is Rab proteins geranylgeranyltransferase component A 2 (CHML) from Homo sapiens (Human).